The following is a 966-amino-acid chain: Glycine dehydrogenase (decarboxylating) (966 aa).

Lys-713 bears the N6-(pyridoxal phosphate)lysine mark.

It belongs to the GcvP family. As to quaternary structure, the glycine cleavage system is composed of four proteins: P, T, L and H. Pyridoxal 5'-phosphate serves as cofactor.

The enzyme catalyses N(6)-[(R)-lipoyl]-L-lysyl-[glycine-cleavage complex H protein] + glycine + H(+) = N(6)-[(R)-S(8)-aminomethyldihydrolipoyl]-L-lysyl-[glycine-cleavage complex H protein] + CO2. Its function is as follows. The glycine cleavage system catalyzes the degradation of glycine. The P protein binds the alpha-amino group of glycine through its pyridoxal phosphate cofactor; CO(2) is released and the remaining methylamine moiety is then transferred to the lipoamide cofactor of the H protein. The protein is Glycine dehydrogenase (decarboxylating) of Shewanella halifaxensis (strain HAW-EB4).